Consider the following 34-residue polypeptide: METNDLGFVASLLFILVPAIFLIVLYIGTNRSES.

The chain crosses the membrane as a helical span at residues 7–27 (GFVASLLFILVPAIFLIVLYI).

The protein belongs to the PsbM family. As to quaternary structure, PSII is composed of 1 copy each of membrane proteins PsbA, PsbB, PsbC, PsbD, PsbE, PsbF, PsbH, PsbI, PsbJ, PsbK, PsbL, PsbM, PsbT, PsbX, PsbY, PsbZ, Psb30/Ycf12, peripheral proteins PsbO, CyanoQ (PsbQ), PsbU, PsbV and a large number of cofactors. It forms dimeric complexes.

Its subcellular location is the cellular thylakoid membrane. In terms of biological role, one of the components of the core complex of photosystem II (PSII). PSII is a light-driven water:plastoquinone oxidoreductase that uses light energy to abstract electrons from H(2)O, generating O(2) and a proton gradient subsequently used for ATP formation. It consists of a core antenna complex that captures photons, and an electron transfer chain that converts photonic excitation into a charge separation. This subunit is found at the monomer-monomer interface. This Parasynechococcus marenigrum (strain WH8102) protein is Photosystem II reaction center protein M.